The chain runs to 29 residues: Dermaseptin-J5 (29 aa).

V29 carries the valine amide modification.

Expressed by the skin glands.

It localises to the secreted. Its function is as follows. Has antimicrobial activity. In Phasmahyla jandaia (Jandaia leaf frog), this protein is Dermaseptin-J5.